The primary structure comprises 189 residues: Glycerol-3-phosphate acyltransferase (189 aa).

5 helical membrane passes run 1-21 (MVWLLAILAYLLGSLSFAVLL), 50-70 (KLAILTLLGDVGKGLLPVLVA), 72-92 (WLGLGVMEEAWVGIAAVIGHL), 111-131 (MLLGLYPPAVLLAAAAWLLTF), and 151-171 (LLAWQQPGALLPMTVLTGLIV).

It belongs to the PlsY family. As to quaternary structure, probably interacts with PlsX.

It is found in the cell inner membrane. It carries out the reaction an acyl phosphate + sn-glycerol 3-phosphate = a 1-acyl-sn-glycero-3-phosphate + phosphate. It functions in the pathway lipid metabolism; phospholipid metabolism. Its function is as follows. Catalyzes the transfer of an acyl group from acyl-phosphate (acyl-PO(4)) to glycerol-3-phosphate (G3P) to form lysophosphatidic acid (LPA). This enzyme utilizes acyl-phosphate as fatty acyl donor, but not acyl-CoA or acyl-ACP. The polypeptide is Glycerol-3-phosphate acyltransferase (Pseudomonas aeruginosa (strain LESB58)).